Here is a 478-residue protein sequence, read N- to C-terminus: MESKALLLLALSVCLQSLTVSRGGLVAADRITGGKDFRDIESKFALRTPEDTAEDTCHLIPGVTESVANCHFNHSSKTFVVIHGWTVTGMYESWVPKLVAALYKREPDSNVIVVDWLSRAQQHYPVSAGYTKLVGQDVAKFMNWMADEFNYPLGNVHLLGYSLGAHAAGIAGSLTNKKVNRITGLDPAGPNFEYAEAPSRLSPDDADFVDVLHTFTRGSPGRSIGIQKPVGHVDIYPNGGTFQPGCNIGEALRVIAERGLGDVDQLVKCSHERSVHLFIDSLLNEENPSKAYRCNSKEAFEKGLCLSCRKNRCNNMGYEINKVRAKRSSKMYLKTRSQMPYKVFHYQVKIHFSGTESNTYTNQAFEISLYGTVAESENIPFTLPEVSTNKTYSFLLYTEVDIGELLMLKLKWISDSYFSWSNWWSSPGFDIGKIRVKAGETQKKVIFCSREKMSYLQKGKSPVIFVKCHDKSLNRKSG.

Residues Met-1–Ala-28 form the signal peptide. Residues Lys-35–Thr-56 are interaction with GPIHBP1. Cys-57 and Cys-70 are joined by a disulfide. The N-linked (GlcNAc...) asparagine glycan is linked to Asn-73. At Tyr-124 the chain carries 3'-nitrotyrosine. The active-site Nucleophile is Ser-162. Asp-186 functions as the Charge relay system in the catalytic mechanism. Position 194 is a 3'-nitrotyrosine (Tyr-194). Ca(2+)-binding residues include Ala-197, Arg-200, Ser-202, and Asp-205. Residues Cys-246 and Cys-269 are joined by a disulfide bond. Positions Cys-246 to Cys-269 are essential for determining substrate specificity. The active-site Charge relay system is His-271. Residue Asn-287 is glycosylated (N-linked (GlcNAc...) asparagine). Disulfide bonds link Cys-294-Cys-313 and Cys-305-Cys-308. The region spanning Phe-344–Lys-467 is the PLAT domain. A 3'-nitrotyrosine modification is found at Tyr-346. The N-linked (GlcNAc...) asparagine glycan is linked to Asn-389. The tract at residues Trp-420 to Trp-424 is important for interaction with lipoprotein particles. The important for heparin binding stretch occupies residues Lys-433–Lys-437. Positions Ile-446–Asp-470 are interaction with GPIHBP1. The cysteines at positions 448 and 468 are disulfide-linked.

It belongs to the AB hydrolase superfamily. Lipase family. As to quaternary structure, homodimer. Interacts with GPIHBP1 with 1:1 stoichiometry. Interacts with APOC2; the interaction activates LPL activity in the presence of lipids. Interaction with heparan sulfate proteoglycans is required to protect LPL against loss of activity. Associates with lipoprotein particles in blood plasma. Interacts with LMF1 and SEL1L; interaction with SEL1L is required to prevent aggregation of newly synthesized LPL in the endoplasmic reticulum (ER), and for normal export of LPL from the ER to the extracellular space. Interacts with SORL1; SORL1 acts as a sorting receptor, promoting LPL localization to endosomes and later to lysosomes, leading to degradation of newly synthesized LPL. Tyrosine nitration after lipopolysaccharide (LPS) challenge down-regulates the lipase activity. In terms of tissue distribution, detected in milk (at protein level).

It localises to the cell membrane. The protein resides in the secreted. It is found in the extracellular space. Its subcellular location is the extracellular matrix. The enzyme catalyses a triacylglycerol + H2O = a diacylglycerol + a fatty acid + H(+). The catalysed reaction is a 1,2-diacyl-sn-glycero-3-phosphocholine + H2O = a 2-acyl-sn-glycero-3-phosphocholine + a fatty acid + H(+). It carries out the reaction 1,2,3-tri-(9Z-octadecenoyl)-glycerol + H2O = di-(9Z)-octadecenoylglycerol + (9Z)-octadecenoate + H(+). It catalyses the reaction 1,2-di-(9Z-octadecenoyl)-sn-glycero-3-phosphocholine + H2O = (9Z-octadecenoyl)-sn-glycero-3-phosphocholine + (9Z)-octadecenoate + H(+). The enzyme catalyses 1,2,3-tributanoylglycerol + H2O = dibutanoylglycerol + butanoate + H(+). The catalysed reaction is 1,2-dihexadecanoyl-sn-glycero-3-phosphocholine + H2O = hexadecanoyl-sn-glycero-3-phosphocholine + hexadecanoate + H(+). The apolipoprotein APOC2 acts as a coactivator of LPL activity. Ca(2+) binding promotes protein stability and formation of the active homodimer. Interaction with GPIHBP1 protects LPL against inactivation by ANGPTL4. Its function is as follows. Key enzyme in triglyceride metabolism. Catalyzes the hydrolysis of triglycerides from circulating chylomicrons and very low density lipoproteins (VLDL), and thereby plays an important role in lipid clearance from the blood stream, lipid utilization and storage. Although it has both phospholipase and triglyceride lipase activities it is primarily a triglyceride lipase with low but detectable phospholipase activity. Mediates margination of triglyceride-rich lipoprotein particles in capillaries. Recruited to its site of action on the luminal surface of vascular endothelium by binding to GPIHBP1 and cell surface heparan sulfate proteoglycans. This chain is Lipoprotein lipase (LPL), found in Bos taurus (Bovine).